The chain runs to 153 residues: Ribonuclease H (153 aa).

The region spanning 4–146 (NNEIVEIYTD…CDRLATEQIK (143 aa)) is the RNase H type-1 domain. The Mg(2+) site is built by Asp-13, Glu-51, Asp-73, and Asp-138.

This sequence belongs to the RNase H family. Monomer. It depends on Mg(2+) as a cofactor.

It is found in the cytoplasm. It catalyses the reaction Endonucleolytic cleavage to 5'-phosphomonoester.. Functionally, endonuclease that specifically degrades the RNA of RNA-DNA hybrids. The protein is Ribonuclease H of Caldanaerobacter subterraneus subsp. tengcongensis (strain DSM 15242 / JCM 11007 / NBRC 100824 / MB4) (Thermoanaerobacter tengcongensis).